The chain runs to 316 residues: DDRGK domain-containing protein 1 (316 aa).

Residues 1–3 (MVE) lie on the Lumenal side of the membrane. A helical membrane pass occupies residues 4-24 (LDYLFLGSVGFLTIALMLIIL). At 25 to 316 (RIIKLYFDEK…VEHVSELTAA (292 aa)) the chain is on the cytoplasmic side. Residues 147–187 (LEQEKEKRLQKEREKQMEQEEEERKRKCREREEREKREEEE) form a disordered region.

It belongs to the DDRGK1 family.

It is found in the endoplasmic reticulum membrane. Functionally, substrate adapter for ufmylation, the covalent attachment of the ubiquitin-like modifier UFM1 to substrate proteins. This Brugia malayi (Filarial nematode worm) protein is DDRGK domain-containing protein 1.